The chain runs to 61 residues: Putative antitoxin VapB21 (61 aa).

Belongs to the UPF0165 family.

Functionally, possibly the antitoxin component of a type II toxin-antitoxin (TA) system. Its cognate toxin is VapC21 (Potential). This is Putative antitoxin VapB21 (vapB21) from Archaeoglobus fulgidus (strain ATCC 49558 / DSM 4304 / JCM 9628 / NBRC 100126 / VC-16).